The following is a 308-amino-acid chain: Putative glutamine amidotransferase Rv2859c (308 aa).

The disordered stretch occupies residues 1–62 (MDLSASRSDG…ASPRLRSPLG (62 aa)). Composition is skewed to low complexity over residues 13 to 24 (PLRPASPRLRSP), 31 to 42 (PLRPASPRLRSP), and 49 to 61 (PLRP…RSPL). The 224-residue stretch at 78 to 301 (RTGVWDIPAG…VDAASGYAGR (224 aa)) folds into the Glutamine amidotransferase type-1 domain. The active-site Nucleophile is Cys-177. Active-site residues include His-277 and Glu-279. Residue Lys-289 forms an Isoglutamyl lysine isopeptide (Lys-Gln) (interchain with Q-Cter in protein Pup) linkage.

The protein is Putative glutamine amidotransferase Rv2859c of Mycobacterium tuberculosis (strain ATCC 25618 / H37Rv).